The chain runs to 155 residues: Sweet protein mabinlin-2 (155 aa).

The N-terminal stretch at 1 to 20 (MAKLIFLFATLALFVLLANA) is a signal peptide. A propeptide spanning residues 21–35 (SIQTTVIEVDEEEDN) is cleaved from the precursor. Pyrrolidone carboxylic acid is present on glutamine 36. Disulfide bonds link cysteine 40–cysteine 103, cysteine 53–cysteine 92, cysteine 93–cysteine 141, and cysteine 105–cysteine 149. The segment at 64–86 (GGQPDELEDEVEDDNDDENQPRR) is disordered. The span at 68–81 (DELEDEVEDDNDDE) shows a compositional bias: acidic residues. Positions 69–82 (ELEDEVEDDNDDEN) are excised as a propeptide. Glutamine 83 is subject to Pyrrolidone carboxylic acid. A propeptide is located at residue proline 155.

Belongs to the 2S seed storage albumins family. Heterodimer of a small A and a large B chain linked by disulfide bonds.

Heat stable 2S seed storage protein having sweetness-inducing activity. The polypeptide is Sweet protein mabinlin-2 (Capparis masaikai (Mabinlang)).